Here is a 387-residue protein sequence, read N- to C-terminus: EP300-interacting inhibitor of differentiation 3 (387 aa).

Basic and acidic residues predominate over residues 1 to 19; sequence MSEEKCSLTGGEEKGEELA. The tract at residues 1 to 77 is disordered; it reads MSEEKCSLTG…SDDLSPEAPC (77 aa). Positions 32-72 are enriched in acidic residues; that stretch reads EEDDDDDEEALKKEEEEEEEEEEEDEEEEEEGPDSSSDDLS.

It belongs to the NSE4 family. As to quaternary structure, component of the SMC5-SMC6 complex which consists at least of SMC5, SMC6, NSMCE2, NSMCE1, NSMCE4A or EID3 and NSMCE3. NSMCE1, NSMCE4A or EID3 and NSMCE3 probably form a subcomplex that bridges the head domains of the SMC5:SMC6 heterodimer. Homodimer, and heterodimer with EID2. Interacts with the C-terminal region of CREBBP.

The protein localises to the nucleus. It is found in the cytoplasm. Its subcellular location is the chromosome. The protein resides in the telomere. Functionally, tissue-specific component of the SMC5-SMC6 complex, a complex involved in repair of DNA double-strand breaks by homologous recombination. The complex may promote sister chromatid homologous recombination by recruiting the SMC1-SMC3 cohesin complex to double-strand breaks. The complex is required for telomere maintenance via recombination and mediates sumoylation of shelterin complex (telosome) components. Its function is as follows. Acts as a repressor of nuclear receptor-dependent transcription possibly by interfering with CREBBP-dependent coactivation. May function as a coinhibitor of other CREBBP/EP300-dependent transcription factors. The sequence is that of EP300-interacting inhibitor of differentiation 3 from Rattus norvegicus (Rat).